A 133-amino-acid polypeptide reads, in one-letter code: S-protein homolog 21 (133 aa).

An N-terminal signal peptide occupies residues 1 to 21 (MKNLSIFLFVVGLCMISDVYG).

This sequence belongs to the plant self-incompatibility (S1) protein family.

It is found in the secreted. This Arabidopsis thaliana (Mouse-ear cress) protein is S-protein homolog 21.